Reading from the N-terminus, the 119-residue chain is Holo-[acyl-carrier-protein] synthase (119 aa).

Mg(2+) contacts are provided by Asp8 and Glu58.

The protein belongs to the P-Pant transferase superfamily. AcpS family. Mg(2+) is required as a cofactor.

The protein resides in the cytoplasm. It catalyses the reaction apo-[ACP] + CoA = holo-[ACP] + adenosine 3',5'-bisphosphate + H(+). Its function is as follows. Transfers the 4'-phosphopantetheine moiety from coenzyme A to a Ser of acyl-carrier-protein. The chain is Holo-[acyl-carrier-protein] synthase from Limosilactobacillus fermentum (strain NBRC 3956 / LMG 18251) (Lactobacillus fermentum).